We begin with the raw amino-acid sequence, 296 residues long: Ethanolamine ammonia-lyase small subunit (296 aa).

2 residues coordinate adenosylcob(III)alamin: Val-209 and Glu-230.

The protein belongs to the EutC family. As to quaternary structure, the basic unit is a heterodimer which dimerizes to form tetramers. The heterotetramers trimerize; 6 large subunits form a core ring with 6 small subunits projecting outwards. Adenosylcob(III)alamin serves as cofactor.

It localises to the bacterial microcompartment. It catalyses the reaction ethanolamine = acetaldehyde + NH4(+). It functions in the pathway amine and polyamine degradation; ethanolamine degradation. In terms of biological role, catalyzes the deamination of various vicinal amino-alcohols to oxo compounds. Allows this organism to utilize ethanolamine as the sole source of nitrogen and carbon in the presence of external vitamin B12. The protein is Ethanolamine ammonia-lyase small subunit of Lachnoclostridium phytofermentans (strain ATCC 700394 / DSM 18823 / ISDg) (Clostridium phytofermentans).